The following is a 120-amino-acid chain: Large ribosomal subunit protein bL12 (120 aa).

The span at 95 to 112 (KEGVSKEEAEEVQGKLEE) shows a compositional bias: basic and acidic residues. A disordered region spans residues 95–120 (KEGVSKEEAEEVQGKLEEAGASVEVK).

The protein belongs to the bacterial ribosomal protein bL12 family. In terms of assembly, homodimer. Part of the ribosomal stalk of the 50S ribosomal subunit. Forms a multimeric L10(L12)X complex, where L10 forms an elongated spine to which 2 to 4 L12 dimers bind in a sequential fashion. Binds GTP-bound translation factors.

Its function is as follows. Forms part of the ribosomal stalk which helps the ribosome interact with GTP-bound translation factors. Is thus essential for accurate translation. The protein is Large ribosomal subunit protein bL12 of Oceanobacillus iheyensis (strain DSM 14371 / CIP 107618 / JCM 11309 / KCTC 3954 / HTE831).